Consider the following 482-residue polypeptide: Butyrophilin-like protein 2 (482 aa).

Topologically, residues 1 to 6 are cytoplasmic; the sequence is MVDFPG. The helical; Signal-anchor for type II membrane protein transmembrane segment at 7–23 threads the bilayer; that stretch reads YNLSGAVASFLFILLTM. At 24-482 the chain is on the extracellular side; sequence KQSEDFRVIG…VAVGLPRKRS (459 aa). 3 consecutive Ig-like V-type domains span residues 29-140, 142-234, and 236-355; these read FRVI…LLLK, AGLG…SVIS, and PEKL…ASLD. Intrachain disulfides connect cysteine 50–cysteine 124, cysteine 164–cysteine 218, and cysteine 267–cysteine 341. Asparagine 210 carries N-linked (GlcNAc...) asparagine glycosylation. Asparagine 427 carries an N-linked (GlcNAc...) asparagine glycan.

Belongs to the immunoglobulin superfamily. BTN/MOG family. As to expression, expressed in brain, heart, kidney, liver, pancreas, ovary, leukocyte, small intestine, testis and thymus.

The protein localises to the membrane. Negative regulator of T-cell proliferation. The chain is Butyrophilin-like protein 2 from Homo sapiens (Human).